We begin with the raw amino-acid sequence, 255 residues long: Pimeloyl-[acyl-carrier protein] methyl ester esterase (255 aa).

Positions 16 to 242 (LVLLHGWGMN…SSHAPFITEP (227 aa)) constitute an AB hydrolase-1 domain. Substrate is bound by residues Trp-22, 82–83 (SL), and 143–147 (FMALQ). Ser-82 (nucleophile) is an active-site residue. Catalysis depends on residues Asp-207 and His-235. Residue His-235 participates in substrate binding.

Belongs to the AB hydrolase superfamily. Carboxylesterase BioH family. As to quaternary structure, monomer.

It localises to the cytoplasm. The enzyme catalyses 6-carboxyhexanoyl-[ACP] methyl ester + H2O = 6-carboxyhexanoyl-[ACP] + methanol + H(+). The protein operates within cofactor biosynthesis; biotin biosynthesis. Its function is as follows. The physiological role of BioH is to remove the methyl group introduced by BioC when the pimeloyl moiety is complete. It allows to synthesize pimeloyl-ACP via the fatty acid synthetic pathway through the hydrolysis of the ester bonds of pimeloyl-ACP esters. This Vibrio vulnificus (strain CMCP6) protein is Pimeloyl-[acyl-carrier protein] methyl ester esterase.